A 50-amino-acid chain; its full sequence is Small nuclear ribonucleoprotein Sm D2 (50 aa).

Residues 1 to 36 form a disordered region; that stretch reads MSLLNKPKSEMTPEELQKREEEEFNTGPLSVXTQSX. S2 bears the N-acetylserine mark. Residues K6 and K8 each participate in a glycyl lysine isopeptide (Lys-Gly) (interchain with G-Cter in SUMO2) cross-link. The segment covering 7–21 has biased composition (basic and acidic residues); it reads PKSEMTPEELQKREE. Position 9 is a phosphoserine (S9). Position 12 is a phosphothreonine (T12).

Belongs to the snRNP core protein family. As to quaternary structure, core component of the spliceosomal U1, U2, U4 and U5 small nuclear ribonucleoproteins (snRNPs), the building blocks of the spliceosome. Most spliceosomal snRNPs contain a common set of Sm proteins, SNRPB, SNRPD1, SNRPD2, SNRPD3, SNRPE, SNRPF and SNRPG that assemble in a heptameric protein ring on the Sm site of the small nuclear RNA to form the core snRNP. Component of the U1 snRNP. The U1 snRNP is composed of the U1 snRNA and the 7 core Sm proteins SNRPB, SNRPD1, SNRPD2, SNRPD3, SNRPE, SNRPF and SNRPG, and at least three U1 snRNP-specific proteins SNRNP70/U1-70K, SNRPA/U1-A and SNRPC/U1-C. Component of the U4/U6-U5 tri-snRNP complex composed of the U4, U6 and U5 snRNAs and at least PRPF3, PRPF4, PRPF6, PRPF8, PRPF31, SNRNP200, TXNL4A, SNRNP40, SNRPB, SNRPD1, SNRPD2, SNRPD3, SNRPE, SNRPF, SNRPG, DDX23, CD2BP2, PPIH, SNU13, EFTUD2, SART1 and USP39, plus LSM2, LSM3, LSM4, LSM5, LSM6, LSM7 and LSM8. Component of the minor spliceosome, which splices U12-type introns. Part of the SMN-Sm complex that contains SMN1, GEMIN2/SIP1, DDX20/GEMIN3, GEMIN4, GEMIN5, GEMIN6, GEMIN7, GEMIN8, STRAP/UNRIP and the Sm proteins SNRPB, SNRPD1, SNRPD2, SNRPD3, SNRPE, SNRPF and SNRPG; catalyzes core snRNPs assembly. Forms a 6S pICln-Sm complex composed of CLNS1A/pICln, SNRPD1, SNRPD2, SNRPE, SNRPF and SNRPG; ring-like structure where CLNS1A/pICln mimics additional Sm proteins and which is unable to assemble into the core snRNP. Interacts with SMN1; the interaction is direct. Interacts with GEMIN2; the interaction is direct. Interacts with SNRPD1; the interaction is direct. Interacts with SNRPF; the interaction is direct.

It is found in the cytoplasm. It localises to the cytosol. Its subcellular location is the nucleus. Its function is as follows. Plays a role in pre-mRNA splicing as a core component of the spliceosomal U1, U2, U4 and U5 small nuclear ribonucleoproteins (snRNPs), the building blocks of the spliceosome. Component of both the pre-catalytic spliceosome B complex and activated spliceosome C complexes. As a component of the minor spliceosome, involved in the splicing of U12-type introns in pre-mRNAs. The protein is Small nuclear ribonucleoprotein Sm D2 (SNRPD2) of Sus scrofa (Pig).